The sequence spans 465 residues: Cysteine--tRNA ligase (465 aa).

C29 provides a ligand contact to Zn(2+). The 'HIGH' region signature appears at 31–41 (PTVYNYIHIGN). C209, H234, and E238 together coordinate Zn(2+). The 'KMSKS' region signature appears at 266 to 270 (KMSKS). K269 is an ATP binding site. S270 carries the post-translational modification Phosphoserine.

The protein belongs to the class-I aminoacyl-tRNA synthetase family. In terms of assembly, monomer. It depends on Zn(2+) as a cofactor.

It localises to the cytoplasm. It catalyses the reaction tRNA(Cys) + L-cysteine + ATP = L-cysteinyl-tRNA(Cys) + AMP + diphosphate. This Bacillus cereus (strain B4264) protein is Cysteine--tRNA ligase.